The chain runs to 240 residues: FAS1 domain-containing protein AN1527 (240 aa).

Positions Met-1–Ser-24 are cleaved as a signal peptide. Residues Glu-91 to Ile-239 form the FAS1 domain.

The protein resides in the vacuole. The polypeptide is FAS1 domain-containing protein AN1527 (Emericella nidulans (strain FGSC A4 / ATCC 38163 / CBS 112.46 / NRRL 194 / M139) (Aspergillus nidulans)).